A 501-amino-acid polypeptide reads, in one-letter code: Beta-secretase 1 (501 aa).

The signal sequence occupies residues 1 to 21; the sequence is MAQALPWLLLWMGSGVLPAHG. Residues 22 to 45 constitute a propeptide that is removed on maturation; sequence SQPGIRLPLRSGLGGAPLGLRLPR. The Extracellular portion of the chain corresponds to 22–457; it reads SQPGIRLPLR…PQTDESTLMT (436 aa). Residues 39-58 form a disordered region; the sequence is LGLRLPRETDEESEEPGRRG. Residues 75–416 enclose the Peptidase A1 domain; sequence YYVEMTLGSP…DRARKRIGFA (342 aa). Asp93 is an active-site residue. The residue at position 126 (Lys126) is an N6-acetyllysine. N-linked (GlcNAc...) asparagine glycans are attached at residues Asn153, Asn172, and Asn223. Cystine bridges form between Cys216-Cys420, Cys278-Cys443, and Cys330-Cys380. An N6-acetyllysine mark is found at Lys275, Lys279, and Lys285. Asp289 is an active-site residue. An N6-acetyllysine mark is found at Lys299, Lys300, and Lys307. Asn354 carries an N-linked (GlcNAc...) asparagine glycan. A helical transmembrane segment spans residues 458–478; that stretch reads IAYVMAAICALFMLPLCLMVC. S-palmitoyl cysteine attachment occurs at residues Cys474, Cys478, Cys482, and Cys485. Over 479 to 501 the chain is Cytoplasmic; that stretch reads QWRCLRCLRHQHDDFADDISLLK. The interval 479-501 is interaction with RTN3; sequence QWRCLRCLRHQHDDFADDISLLK. The DXXLL motif lies at 496–500; the sequence is DISLL. Ser498 carries the phosphoserine modification. Lys501 is covalently cross-linked (Glycyl lysine isopeptide (Lys-Gly) (interchain with G-Cter in ubiquitin)).

The protein belongs to the peptidase A1 family. In terms of assembly, monomer. Interacts (via DXXLL motif) with GGA1, GGA2 and GGA3 (via their VHS domain); the interaction highly increases when BACE1 is phosphorylated at Ser-498. Interacts with RTN1; RTN2; RTN3 and RTN4; the interaction leads to inhibition of amyloid precursor protein processing. Interacts with SNX6. Interacts with PCSK9. Interacts with NAT8 and NAT8B. Interacts with BIN1. Interacts (via extracellular domain) with ADAM10 (via extracellular domain). Interacts with SORL1; this interaction may affect binding with APP and hence reduce APP cleavage. Interacts with NRDC AND NRG1. Post-translationally, palmitoylation mediates lipid raft localization. In terms of processing, acetylated in the endoplasmic reticulum at Lys-126, Lys-275, Lys-279, Lys-285, Lys-299, Lys-300 and Lys-307. Acetylation by NAT8 and NAT8B is transient and deacetylation probably occurs in the Golgi. Acetylation regulates the maturation, the transport to the plasma membrane, the stability and the expression of the protein. Ubiquitinated at Lys-501, ubiquitination leads to lysosomal degradation. Monoubiquitinated and 'Lys-63'-linked polyubitinated. Deubiquitnated by USP8; inhibits lysosomal degradation. Post-translationally, phosphorylation at Ser-498 is required for interaction with GGA1 and retrograded transport from endosomal compartments to the trans-Golgi network. Non-phosphorylated BACE1 enters a direct recycling route to the cell surface. In terms of processing, N-Glycosylated. Addition of a bisecting N-acetylglucosamine by MGAT3 blocks lysosomal targeting, further degradation and is required for maintaining stability under stress conditions.

The protein localises to the cell membrane. It localises to the golgi apparatus. The protein resides in the trans-Golgi network. It is found in the endoplasmic reticulum. Its subcellular location is the endosome. The protein localises to the cell surface. It localises to the cytoplasmic vesicle membrane. The protein resides in the membrane raft. It is found in the lysosome. Its subcellular location is the late endosome. The protein localises to the early endosome. It localises to the recycling endosome. The protein resides in the cell projection. It is found in the axon. Its subcellular location is the dendrite. The catalysed reaction is Broad endopeptidase specificity. Cleaves Glu-Val-Asn-Leu-|-Asp-Ala-Glu-Phe in the Swedish variant of Alzheimer's amyloid precursor protein.. Its activity is regulated as follows. Inhibited by RTN3 and RTN4. In terms of biological role, responsible for the proteolytic processing of the amyloid precursor protein (APP). Cleaves at the N-terminus of the A-beta peptide sequence, between residues 671 and 672 of APP, leads to the generation and extracellular release of beta-cleaved soluble APP, and a corresponding cell-associated C-terminal fragment which is later released by gamma-secretase. Cleaves CHL1. This is Beta-secretase 1 (BACE1) from Bos taurus (Bovine).